We begin with the raw amino-acid sequence, 53 residues long: Abaecin (53 aa).

Residues 1–19 (MKVVIFIFALLATICAAFA) form the signal peptide.

It localises to the secreted. Its function is as follows. This peptide has bactericidal activity. In Apis mellifera (Honeybee), this protein is Abaecin.